Reading from the N-terminus, the 196-residue chain is Nucleoid occlusion factor SlmA (196 aa).

An HTH tetR-type domain is found at 7–68; sequence INRREEILQA…GLIEFIEESL (62 aa). A DNA-binding region (H-T-H motif) is located at residues 31-50; sequence TTAKLAKQVGVSEAALYRHF. Residues 110–139 are a coiled coil; that stretch reads HALMFENERLRDRINQLFERIETSLRQILR.

The protein belongs to the nucleoid occlusion factor SlmA family. Homodimer. Interacts with FtsZ.

It is found in the cytoplasm. It localises to the nucleoid. Its function is as follows. Required for nucleoid occlusion (NO) phenomenon, which prevents Z-ring formation and cell division over the nucleoid. Acts as a DNA-associated cell division inhibitor that binds simultaneously chromosomal DNA and FtsZ, and disrupts the assembly of FtsZ polymers. SlmA-DNA-binding sequences (SBS) are dispersed on non-Ter regions of the chromosome, preventing FtsZ polymerization at these regions. The polypeptide is Nucleoid occlusion factor SlmA (Vibrio cholerae serotype O1 (strain ATCC 39315 / El Tor Inaba N16961)).